Reading from the N-terminus, the 210-residue chain is Ribonuclease HII (210 aa).

One can recognise an RNase H type-2 domain in the interval 16–207 (AIVVGVDEVG…VKKCIISTKN (192 aa)). D22, E23, and D116 together coordinate a divalent metal cation.

This sequence belongs to the RNase HII family. Mn(2+) serves as cofactor. It depends on Mg(2+) as a cofactor.

The protein resides in the cytoplasm. The catalysed reaction is Endonucleolytic cleavage to 5'-phosphomonoester.. Its function is as follows. Endonuclease that specifically degrades the RNA of RNA-DNA hybrids. This chain is Ribonuclease HII, found in Anaplasma phagocytophilum (strain HZ).